A 571-amino-acid chain; its full sequence is Proline--tRNA ligase (571 aa).

This sequence belongs to the class-II aminoacyl-tRNA synthetase family. ProS type 1 subfamily. In terms of assembly, homodimer.

The protein resides in the cytoplasm. The enzyme catalyses tRNA(Pro) + L-proline + ATP = L-prolyl-tRNA(Pro) + AMP + diphosphate. Functionally, catalyzes the attachment of proline to tRNA(Pro) in a two-step reaction: proline is first activated by ATP to form Pro-AMP and then transferred to the acceptor end of tRNA(Pro). As ProRS can inadvertently accommodate and process non-cognate amino acids such as alanine and cysteine, to avoid such errors it has two additional distinct editing activities against alanine. One activity is designated as 'pretransfer' editing and involves the tRNA(Pro)-independent hydrolysis of activated Ala-AMP. The other activity is designated 'posttransfer' editing and involves deacylation of mischarged Ala-tRNA(Pro). The misacylated Cys-tRNA(Pro) is not edited by ProRS. This is Proline--tRNA ligase from Pseudomonas aeruginosa (strain UCBPP-PA14).